Here is a 100-residue protein sequence, read N- to C-terminus: MRKMMQREVTYTTAQLARMKMEDGQVTAEVLEPVTLIGNLSVEQAQREINKRPEFKENPAQVVGVEPNTQLYELPLDVFLEHATVKERPAAKEEVAEVQA.

A DNA-binding region spans residues 1–19 (MRKMMQREVTYTTAQLARM).

This sequence belongs to the phi29likevirus histone-like protein p6 family. In terms of assembly, homodimer. Homomultimer. Binds to double-stranded DNA giving rise to multimeric nucleoprotein complexes. Binding specificity for the viral DNA is based on supercoiling, the viral genome having a negative superhelicity lower than that of plasmid DNA. Interacts with the DNA replication protein p17; this interaction optimizes the binding of protein p6 at the viral DNA ends, thus favoring the initiation of replication.

Its function is as follows. Histone-like nucleoprotein that binds to the viral dsDNA and responsible for wrapping and compacting the viral DNA about 4-fold. Forms a nucleoprotein complex in which the DNA adopts a right-handed toroidal conformation winding around a protein core. Binds ito most, if not all, the viral genome, although with different affinity, the highest one corresponding to the genome ends. The formation of the nucleoprotein complex at the genome ends, activates the initiation of viral DNA replication. The binding of p6 would recruit the complex formed by the TP and the DNA polymerase to the origin. Protein p6 also represses early transcription from promoter C2, and, together with protein p4, represses transcription from promoters A2b and A2c and activates late transcription from promoter A3. Protein p6 is therefore involved in the early to late transcription switch. The formation of the nucleoprotein complex at the right end of the phage genome where the early promoter C2 is located affects local topology, which may contribute to the promoter repression. The polypeptide is Histone-like protein p6 (6) (Bacillus phage B103 (Bacteriophage B103)).